The following is a 171-amino-acid chain: Transcription factor E (171 aa).

Residues 5–91 (DNKAVRGYIQ…LWKLDLDNSV (87 aa)) enclose the HTH TFE/IIEalpha-type domain.

It belongs to the TFE family. In terms of assembly, monomer. Interaction with RNA polymerase subunits RpoF and RpoE is necessary for Tfe stimulatory transcription activity. Able to interact with Tbp and RNA polymerase in the absence of DNA promoter. Interacts both with the preinitiation and elongation complexes.

Its function is as follows. Transcription factor that plays a role in the activation of archaeal genes transcribed by RNA polymerase. Facilitates transcription initiation by enhancing TATA-box recognition by TATA-box-binding protein (Tbp), and transcription factor B (Tfb) and RNA polymerase recruitment. Not absolutely required for transcription in vitro, but particularly important in cases where Tbp or Tfb function is not optimal. It dynamically alters the nucleic acid-binding properties of RNA polymerases by stabilizing the initiation complex and destabilizing elongation complexes. Seems to translocate with the RNA polymerase following initiation and acts by binding to the non template strand of the transcription bubble in elongation complexes. The sequence is that of Transcription factor E from Methanocella arvoryzae (strain DSM 22066 / NBRC 105507 / MRE50).